A 397-amino-acid polypeptide reads, in one-letter code: Phosphoglycerate kinase (397 aa).

Substrate is bound by residues 25–27 (DLN), R41, 64–67 (HLGR), R118, and R151. ATP-binding positions include K202, E324, and 350–353 (GGDT).

The protein belongs to the phosphoglycerate kinase family. In terms of assembly, monomer.

Its subcellular location is the cytoplasm. The catalysed reaction is (2R)-3-phosphoglycerate + ATP = (2R)-3-phospho-glyceroyl phosphate + ADP. It participates in carbohydrate degradation; glycolysis; pyruvate from D-glyceraldehyde 3-phosphate: step 2/5. The protein is Phosphoglycerate kinase of Paracidovorax citrulli (strain AAC00-1) (Acidovorax citrulli).